The following is a 471-amino-acid chain: 5-hydroxytryptamine receptor 2A (471 aa).

The Extracellular portion of the chain corresponds to 1-80 (MDILCEENTS…LQEKNWSALL (80 aa)). Residues Asn8, Asn38, Asn44, Asn51, and Asn54 are each glycosylated (N-linked (GlcNAc...) asparagine). A helical membrane pass occupies residues 81–97 (TAVVIILTIAGNILVIM). Over 98-111 (AVSLEKKLQNATNY) the chain is Cytoplasmic. A helical membrane pass occupies residues 112 to 137 (FLMSLAIADMLLGFLVMPVSMLTILY). At 138–146 (GYRWPLPSK) the chain is on the extracellular side. A helical membrane pass occupies residues 147-171 (LCAVWIYLDVLFSTASIMHLCAISL). A disulfide bridge connects residues Cys148 and Cys227. A serotonin-binding site is contributed by Asp155. Positions 172-174 (DRY) match the DRY motif; important for ligand-induced conformation changes motif. At 172–191 (DRYVAIQNPIHHSRFNSRTK) the chain is on the cytoplasmic side. Residues 192 to 215 (AFLKIIAVWTISVGISMPIPVFGL) form a helical membrane-spanning segment. The Extracellular portion of the chain corresponds to 216–232 (QDDSKVFKEGSCLLADD). Residues 233-258 (NFVLIGSFVSFFIPLTIMVITYFLTI) form a helical membrane-spanning segment. Residues 259–322 (KSLQKEATLC…QSISNEQKAC (64 aa)) are Cytoplasmic-facing. Ser280 carries the post-translational modification Phosphoserine. The helical transmembrane segment at 323–348 (KVLGIVFFLFVVMWCPFFITNIMAVI) threads the bilayer. Residue Asn343 coordinates serotonin. Cys349 and Cys353 form a disulfide bridge. Residues 349–356 (CKESCNED) are Extracellular-facing. Residues 357–382 (VIGALLNVFVWIGYLSSAVNPLVYTL) form a helical membrane-spanning segment. The short motif at 376–380 (NPLVY) is the NPxxY motif; important for ligand-induced conformation changes and signaling element. Over 383–471 (FNKTYRSAFS…DGVNEKVSCV (89 aa)) the chain is Cytoplasmic. Positions 450-471 (KQHSEDASKDNSDGVNEKVSCV) are disordered. Over residues 451–465 (QHSEDASKDNSDGVN) the composition is skewed to basic and acidic residues. The PDZ-binding signature appears at 469-471 (SCV).

This sequence belongs to the G-protein coupled receptor 1 family. In terms of assembly, interacts (via C-terminus) with MPDZ and PATJ. May interact (via C-terminus) with MPP3, PRDX6, DLG4, DLG1, CASK, APBA1 and MAGI2. Interacts with GRM2 and DRD2; this may affect signaling.

Its subcellular location is the cell membrane. The protein localises to the cell projection. It localises to the dendrite. It is found in the axon. The protein resides in the cytoplasmic vesicle. Its subcellular location is the membrane. The protein localises to the caveola. It localises to the presynapse. With respect to regulation, G-protein coupled receptor activity is regulated by lipids: oleamide increases HTR2A-mediated activity. Its function is as follows. G-protein coupled receptor for 5-hydroxytryptamine (serotonin). Also functions as a receptor for various drugs and psychoactive substances, including mescaline, psilocybin, 1-(2,5-dimethoxy-4-iodophenyl)-2-aminopropane (DOI) and lysergic acid diethylamide (LSD). Ligand binding causes a conformation change that triggers signaling via guanine nucleotide-binding proteins (G proteins) and modulates the activity of downstream effectors. HTR2A is coupled to G(q)/G(11) G alpha proteins and activates phospholipase C-beta, releasing diacylglycerol (DAG) and inositol 1,4,5-trisphosphate (IP3) second messengers that modulate the activity of phosphatidylinositol 3-kinase and promote the release of Ca(2+) ions from intracellular stores, respectively. Beta-arrestin family members inhibit signaling via G proteins and mediate activation of alternative signaling pathways. Affects neural activity, perception, cognition and mood. Plays a role in the regulation of behavior, including responses to anxiogenic situations and psychoactive substances. Plays a role in intestinal smooth muscle contraction, and may play a role in arterial vasoconstriction. The polypeptide is 5-hydroxytryptamine receptor 2A (HTR2A) (Macaca mulatta (Rhesus macaque)).